Consider the following 288-residue polypeptide: Shikimate dehydrogenase (NADP(+)) (288 aa).

Residues 22–24 (SLS) and Thr-69 each bind shikimate. Residue Lys-73 is the Proton acceptor of the active site. Shikimate contacts are provided by Asn-94 and Asp-110. NADP(+)-binding positions include 131–135 (GSGGA) and Leu-228. Tyr-230 contacts shikimate. Gly-251 contributes to the NADP(+) binding site.

This sequence belongs to the shikimate dehydrogenase family. In terms of assembly, homodimer.

It catalyses the reaction shikimate + NADP(+) = 3-dehydroshikimate + NADPH + H(+). It functions in the pathway metabolic intermediate biosynthesis; chorismate biosynthesis; chorismate from D-erythrose 4-phosphate and phosphoenolpyruvate: step 4/7. Involved in the biosynthesis of the chorismate, which leads to the biosynthesis of aromatic amino acids. Catalyzes the reversible NADPH linked reduction of 3-dehydroshikimate (DHSA) to yield shikimate (SA). This is Shikimate dehydrogenase (NADP(+)) from Synechococcus sp. (strain JA-2-3B'a(2-13)) (Cyanobacteria bacterium Yellowstone B-Prime).